Consider the following 234-residue polypeptide: Large ribosomal subunit protein uL1 (234 aa).

Belongs to the universal ribosomal protein uL1 family. Part of the 50S ribosomal subunit.

In terms of biological role, binds directly to 23S rRNA. The L1 stalk is quite mobile in the ribosome, and is involved in E site tRNA release. Its function is as follows. Protein L1 is also a translational repressor protein, it controls the translation of the L11 operon by binding to its mRNA. This is Large ribosomal subunit protein uL1 from Psychromonas ingrahamii (strain DSM 17664 / CCUG 51855 / 37).